We begin with the raw amino-acid sequence, 570 residues long: MAQSKEVPSFRWTQSLRKGLSQFTQTVKSDILKDAKLIADSIDFNQVAQVQRVLRKTKRTDDDLNKLRDLNIEVDRLMSMKSVQKNTIFKVGDLARDELMELASDLEKLKDKIKRTESNGTNAYMGNLPQSQLNRRSEILRTLGFAQQGGRPNGIVRVWDVKDSSKLNNQFGSMPALTIACMTVQGGETMNNVVQALTSLGLLYTVKYPNLSDLDKLIPNHECLQIITKEESSINISGYNLSLLAAVKAGASILDGGNMLETIRVSPDNFSSLIKNTLQVKRREGMFIDDRPGSRNPYENLLYKLCLSGDGWPYIGSRSQIMGRSWDNTSVDLTKKPDAVPEPGAAPRPAERKGQNLRLASLTEGQELIVRAAISELDPSNTIWLDIEDLQLDPVELALYQPAKKQYIHCFRKPHDEKGFKNGSRHSHGILMKDIEDAVPGVLSYVIGLLPPNMVITTQGSDDIRKLLDIHGRKDLKLIDVKFTSDQARLFEHQVWDKFGHLCKQHNGVIISKKNKSKDSPPSPSPDEPHCALLDCIMFHSAVSGELPKEEPIPLLPKEFLFFPKTAFAL.

Positions 54 to 236 are binding site for the cap structure m7GTP; the sequence is LRKTKRTDDD…ITKEESSINI (183 aa). The disordered stretch occupies residues 332–356; sequence DLTKKPDAVPEPGAAPRPAERKGQN. Positions 386 and 388 each coordinate Mg(2+). Asp386 and Glu388 together coordinate Mn(2+). The Zn(2+) site is built by Glu396, Cys503, His506, and Cys531. Asp535 contributes to the Mg(2+) binding site. Asp535 lines the Mn(2+) pocket.

It belongs to the arenaviridae nucleocapsid protein family. In terms of assembly, homomultimerizes to form the nucleocapsid. Binds to viral genomic RNA. Interacts with glycoprotein G2. Interacts with protein Z; this interaction probably directs the encapsidated genome to budding sites. Interacts with protein L; this interaction does not interfere with Z-L interaction. Interacts with host IKBKE (via Protein kinase domain); the interaction inhibits IKBKE kinase activity.

It is found in the virion. The protein localises to the host cytoplasm. Encapsidates the genome, protecting it from nucleases. The encapsidated genomic RNA is termed the nucleocapsid (NC). Serves as template for viral transcription and replication. The increased presence of protein N in host cell does not seem to trigger the switch from transcription to replication as observed in other negative strain RNA viruses. Through the interaction with host IKBKE, strongly inhibits the phosphorylation and nuclear translocation of host IRF3, a protein involved in interferon activation pathway, leading to the inhibition of interferon-beta and IRF3-dependent promoters activation. Also encodes a functional 3'-5' exoribonuclease that degrades preferentially dsRNA substrates and thereby participates in the suppression of interferon induction. This is Nucleoprotein from Artibeus (neotropical fruit bats).